Here is a 322-residue protein sequence, read N- to C-terminus: Epiphycan (322 aa).

The N-terminal stretch at 1–19 is a signal peptide; sequence MGMLARVALGLIIIDAVLA. The tract at residues 58 to 108 is disordered; that stretch reads KVSERLSGNRELLTPGPQLGDNQDEDKDEESTPRLIDGSSPQEPEFPGLLG. Residue S64 is glycosylated (O-linked (Xyl...) (dermatan sulfate) serine). O-linked (GalNAc...) serine glycosylation is present at S96. One can recognise an LRRNT domain in the interval 106 to 143; it reads LLGPHTNEDFPTCLLCTCISTTVYCDDHELDAIPPLPK. C118 and C130 are oxidised to a cystine. 5 LRR repeats span residues 144–165, 168–189, 192–213, 238–258, and 259–280; these read KTTY…DFAS, DLKR…AFRK, HLQE…PNTL, DLHH…PLPE, and SLRA…TFCN. The cysteines at positions 279 and 312 are disulfide-linked. N-linked (GlcNAc...) asparagine glycans are attached at residues N283 and N302. An LRR 6 repeat occupies 290 to 310; the sequence is ALEDIRLDGNPINLSRTPQAY.

The protein belongs to the small leucine-rich proteoglycan (SLRP) family. SLRP class III subfamily. The O-linked polysaccharide on Ser-96 is probably the mucin type linked to GalNAc. There is one glycosaminoglycan chain, known to be dermatan sulfate, and it is probably the O-glycosylation at Ser-64. In terms of tissue distribution, confined to the middle zone of embryonic epiphyseal cartilage consisting of flattened chondrocytes and the ossifying region in the limb buds of chick embryos. Has also been detected in testis.

The protein resides in the secreted. It is found in the extracellular space. Its subcellular location is the extracellular matrix. May have a role in bone formation and also in establishing the ordered structure of cartilage through matrix organization. The protein is Epiphycan (Epyc) of Mus musculus (Mouse).